Here is a 319-residue protein sequence, read N- to C-terminus: Ribosomal RNA large subunit methyltransferase F (319 aa).

It belongs to the methyltransferase superfamily. METTL16/RlmF family.

It is found in the cytoplasm. The catalysed reaction is adenosine(1618) in 23S rRNA + S-adenosyl-L-methionine = N(6)-methyladenosine(1618) in 23S rRNA + S-adenosyl-L-homocysteine + H(+). Specifically methylates the adenine in position 1618 of 23S rRNA. In Aliivibrio fischeri (strain ATCC 700601 / ES114) (Vibrio fischeri), this protein is Ribosomal RNA large subunit methyltransferase F.